The primary structure comprises 241 residues: Glutathione S-transferase theta-3 (241 aa).

Positions 2-82 (GLELYLDLMS…YLSRKYKAPD (81 aa)) constitute a GST N-terminal domain. Glutathione-binding positions include 53–54 (KV) and 66–67 (ES). Residues 88-222 (DLQTRARVDE…VVLKAKDMPP (135 aa)) form the GST C-terminal domain.

This sequence belongs to the GST superfamily. Theta family. As to quaternary structure, homodimer. As to expression, expressed strongly in liver, and at lower levels in kidney and testis.

Its subcellular location is the cytoplasm. The enzyme catalyses RX + glutathione = an S-substituted glutathione + a halide anion + H(+). Functionally, conjugation of reduced glutathione to a wide number of exogenous and endogenous hydrophobic electrophiles. Shows high activity towards 4-nitrobenzyl chloride (4-NBC). Also has lower activity towards 1,2-epoxy-3-(p-nitrophenoxy)propane (EPNP), cumene hydroperoxide, 1-chloro-2,4-dinitrobenzene (CDNB), 7-chloro-4-nitrobenzo-2-oxa-1,3-diazole (NBD-Cl), and ethacrynic acid. This is Glutathione S-transferase theta-3 from Mus musculus (Mouse).